The following is a 198-amino-acid chain: Molybdenum cofactor guanylyltransferase (198 aa).

Residues 14 to 16, Lys27, Asp73, and Asp103 contribute to the GTP site; that span reads LAG. Asp103 is a binding site for Mg(2+).

Belongs to the MobA family. In terms of assembly, monomer. Mg(2+) is required as a cofactor.

Its subcellular location is the cytoplasm. The catalysed reaction is Mo-molybdopterin + GTP + H(+) = Mo-molybdopterin guanine dinucleotide + diphosphate. Its function is as follows. Transfers a GMP moiety from GTP to Mo-molybdopterin (Mo-MPT) cofactor (Moco or molybdenum cofactor) to form Mo-molybdopterin guanine dinucleotide (Mo-MGD) cofactor. The chain is Molybdenum cofactor guanylyltransferase from Pseudomonas aeruginosa (strain ATCC 15692 / DSM 22644 / CIP 104116 / JCM 14847 / LMG 12228 / 1C / PRS 101 / PAO1).